A 477-amino-acid chain; its full sequence is Bifunctional protein HldE (477 aa).

The ribokinase stretch occupies residues 1–318 (MKVNLPAFER…ENAVRGRADT (318 aa)). Residue 195-198 (NLSE) participates in ATP binding. The active site involves Asp-264. Residues 344-477 (MTNGVFDILH…IKKIQTESEK (134 aa)) are cytidylyltransferase.

This sequence in the N-terminal section; belongs to the carbohydrate kinase PfkB family. The protein in the C-terminal section; belongs to the cytidylyltransferase family. In terms of assembly, homodimer.

The catalysed reaction is D-glycero-beta-D-manno-heptose 7-phosphate + ATP = D-glycero-beta-D-manno-heptose 1,7-bisphosphate + ADP + H(+). The enzyme catalyses D-glycero-beta-D-manno-heptose 1-phosphate + ATP + H(+) = ADP-D-glycero-beta-D-manno-heptose + diphosphate. The protein operates within nucleotide-sugar biosynthesis; ADP-L-glycero-beta-D-manno-heptose biosynthesis; ADP-L-glycero-beta-D-manno-heptose from D-glycero-beta-D-manno-heptose 7-phosphate: step 1/4. It functions in the pathway nucleotide-sugar biosynthesis; ADP-L-glycero-beta-D-manno-heptose biosynthesis; ADP-L-glycero-beta-D-manno-heptose from D-glycero-beta-D-manno-heptose 7-phosphate: step 3/4. Functionally, catalyzes the phosphorylation of D-glycero-D-manno-heptose 7-phosphate at the C-1 position to selectively form D-glycero-beta-D-manno-heptose-1,7-bisphosphate. Its function is as follows. Catalyzes the ADP transfer from ATP to D-glycero-beta-D-manno-heptose 1-phosphate, yielding ADP-D-glycero-beta-D-manno-heptose. The chain is Bifunctional protein HldE from Salmonella dublin (strain CT_02021853).